Consider the following 419-residue polypeptide: Serine hydroxymethyltransferase (419 aa).

(6S)-5,6,7,8-tetrahydrofolate contacts are provided by residues Leu-118 and 122 to 124 (GHL). Residue Lys-226 is modified to N6-(pyridoxal phosphate)lysine. Residue Glu-242 participates in (6S)-5,6,7,8-tetrahydrofolate binding.

Belongs to the SHMT family. Homodimer. Pyridoxal 5'-phosphate is required as a cofactor.

It is found in the cytoplasm. The enzyme catalyses (6R)-5,10-methylene-5,6,7,8-tetrahydrofolate + glycine + H2O = (6S)-5,6,7,8-tetrahydrofolate + L-serine. Its pathway is one-carbon metabolism; tetrahydrofolate interconversion. It participates in amino-acid biosynthesis; glycine biosynthesis; glycine from L-serine: step 1/1. Functionally, catalyzes the reversible interconversion of serine and glycine with tetrahydrofolate (THF) serving as the one-carbon carrier. This reaction serves as the major source of one-carbon groups required for the biosynthesis of purines, thymidylate, methionine, and other important biomolecules. Also exhibits THF-independent aldolase activity toward beta-hydroxyamino acids, producing glycine and aldehydes, via a retro-aldol mechanism. The sequence is that of Serine hydroxymethyltransferase from Metamycoplasma arthritidis (strain 158L3-1) (Mycoplasma arthritidis).